Here is a 321-residue protein sequence, read N- to C-terminus: Beta-1,3-N-acetylglucosaminyltransferase manic fringe (321 aa).

The Cytoplasmic segment spans residues 1–7; it reads MQCRLPR. The chain crosses the membrane as a helical; Signal-anchor for type II membrane protein span at residues 8–27; sequence GLAGALLTLLCMGLLCLRYH. The Lumenal portion of the chain corresponds to 28–321; it reads LNLSPQRVQG…TPWCPQLGAR (294 aa). Arg-70 is a binding site for substrate. The N-linked (GlcNAc...) asparagine glycan is linked to Asn-109. Intrachain disulfides connect Cys-110/Cys-121 and Cys-139/Cys-202. Asp-143 is a substrate binding site. Asp-144 serves as a coordination point for Mn(2+). Asn-185 carries N-linked (GlcNAc...) asparagine glycosylation. Asp-232 is an active-site residue. His-256 is a Mn(2+) binding site. Cys-306 and Cys-315 are disulfide-bonded.

It belongs to the glycosyltransferase 31 family. The cofactor is Mn(2+).

It localises to the golgi apparatus membrane. The enzyme catalyses 3-O-(alpha-L-fucosyl)-L-threonyl-[EGF-like domain protein] + UDP-N-acetyl-alpha-D-glucosamine = 3-O-(N-acetyl-beta-D-glucosaminyl-(1-&gt;3)-alpha-L-fucosyl)-L-threonyl-[EGF-like domain protein] + UDP + H(+). It catalyses the reaction 3-O-(alpha-L-fucosyl)-L-seryl-[EGF-like domain protein] + UDP-N-acetyl-alpha-D-glucosamine = 3-O-(N-acetyl-beta-D-glucosaminyl-(1-&gt;3)-alpha-L-fucosyl)-L-seryl-[EGF-like domain protein] + UDP + H(+). Its function is as follows. Glycosyltransferase that initiates the elongation of O-linked fucose residues attached to EGF-like repeats in the extracellular domain of Notch molecules. Modulates NOTCH1 activity by modifying O-fucose residues at specific EGF-like domains resulting in inhibition of NOTCH1 activation by JAG1 and enhancement of NOTCH1 activation by DLL1 via an increase in its binding to DLL1. The sequence is that of Beta-1,3-N-acetylglucosaminyltransferase manic fringe from Homo sapiens (Human).